The sequence spans 75 residues: UPF0270 protein PputGB1_1339 (75 aa).

The protein belongs to the UPF0270 family.

The chain is UPF0270 protein PputGB1_1339 from Pseudomonas putida (strain GB-1).